The sequence spans 240 residues: 1-(5-phosphoribosyl)-5-[(5-phosphoribosylamino)methylideneamino] imidazole-4-carboxamide isomerase (240 aa).

Catalysis depends on aspartate 8, which acts as the Proton acceptor. Aspartate 129 (proton donor) is an active-site residue.

Belongs to the HisA/HisF family.

It localises to the cytoplasm. The enzyme catalyses 1-(5-phospho-beta-D-ribosyl)-5-[(5-phospho-beta-D-ribosylamino)methylideneamino]imidazole-4-carboxamide = 5-[(5-phospho-1-deoxy-D-ribulos-1-ylimino)methylamino]-1-(5-phospho-beta-D-ribosyl)imidazole-4-carboxamide. It functions in the pathway amino-acid biosynthesis; L-histidine biosynthesis; L-histidine from 5-phospho-alpha-D-ribose 1-diphosphate: step 4/9. The chain is 1-(5-phosphoribosyl)-5-[(5-phosphoribosylamino)methylideneamino] imidazole-4-carboxamide isomerase from Listeria monocytogenes serotype 4b (strain F2365).